The primary structure comprises 108 residues: MTNYAIVKASGRQLWFEPGKYYNINYVHANPGDKIIFYKVLLLKNTNSLLIGKPFVEKVEVHATILQHLKDKKITVFKMQAKKGTKKKKGYKTVLTKIKINCIHNHKK.

This sequence belongs to the bacterial ribosomal protein bL21 family. In terms of assembly, part of the 50S ribosomal subunit.

It is found in the plastid. It localises to the chloroplast. Its function is as follows. This protein binds to 23S rRNA. The sequence is that of Large ribosomal subunit protein bL21c from Cyanidium caldarium (Red alga).